Here is a 603-residue protein sequence, read N- to C-terminus: Adenine deaminase (603 aa).

This sequence belongs to the metallo-dependent hydrolases superfamily. Adenine deaminase family. Homodimer. Mn(2+) is required as a cofactor.

The catalysed reaction is adenine + H2O + H(+) = hypoxanthine + NH4(+). The polypeptide is Adenine deaminase (Klebsiella pneumoniae (strain 342)).